The chain runs to 917 residues: Isoleucine--tRNA ligase (917 aa).

Residues 57 to 67 (PYANGNLHMGH) carry the 'HIGH' region motif. L-isoleucyl-5'-AMP is bound at residue Glu-554. A 'KMSKS' region motif is present at residues 595–599 (KMSKS). Lys-598 is a binding site for ATP. Zn(2+) is bound by residues Cys-886, Cys-889, Cys-906, and Cys-909.

Belongs to the class-I aminoacyl-tRNA synthetase family. IleS type 1 subfamily. In terms of assembly, monomer. Requires Zn(2+) as cofactor.

It localises to the cytoplasm. The enzyme catalyses tRNA(Ile) + L-isoleucine + ATP = L-isoleucyl-tRNA(Ile) + AMP + diphosphate. Functionally, catalyzes the attachment of isoleucine to tRNA(Ile). As IleRS can inadvertently accommodate and process structurally similar amino acids such as valine, to avoid such errors it has two additional distinct tRNA(Ile)-dependent editing activities. One activity is designated as 'pretransfer' editing and involves the hydrolysis of activated Val-AMP. The other activity is designated 'posttransfer' editing and involves deacylation of mischarged Val-tRNA(Ile). The sequence is that of Isoleucine--tRNA ligase from Staphylococcus aureus (strain Mu3 / ATCC 700698).